Here is a 95-residue protein sequence, read N- to C-terminus: Small ribosomal subunit protein bS6 (95 aa).

This sequence belongs to the bacterial ribosomal protein bS6 family.

In terms of biological role, binds together with bS18 to 16S ribosomal RNA. This Geobacillus kaustophilus (strain HTA426) protein is Small ribosomal subunit protein bS6.